The following is a 316-amino-acid chain: Secondary metabolism regulator laeA (316 aa).

The protein belongs to the methyltransferase superfamily. LaeA methyltransferase family. In terms of assembly, component of the heterotrimeric velvet complex composed of laeA, ve1 and velB; Ve1 acting as a bridging protein between laeA and velB. Interacts directly with veA.

It localises to the nucleus. It is found in the cytoplasm. The enzyme catalyses L-methionyl-[protein] + S-adenosyl-L-methionine = S-methyl-L-methionyl-[protein] + S-adenosyl-L-homocysteine. Methyltransferase that performs automethylation. No other methyl-accepting substrate has been identified yet. Component of the velvet transcription factor complex that acts as a global regulator for secondary metabolite gene expression. Controls the expression of the mycotoxins trichothecenes and zearalenon gene clusters. Negatively controls perithecial induction, but positively controls virulence toward the host plant. In Gibberella zeae (strain ATCC MYA-4620 / CBS 123657 / FGSC 9075 / NRRL 31084 / PH-1) (Wheat head blight fungus), this protein is Secondary metabolism regulator laeA.